The following is a 1227-amino-acid chain: Protein U7 (1227 aa).

It belongs to the herpesviridae US22 family.

This chain is Protein U7 (U7/U5), found in Homo sapiens (Human).